The primary structure comprises 284 residues: D-tagatose-1,6-bisphosphate aldolase subunit GatY (284 aa).

The active-site Proton donor is the Asp-82. Positions 83 and 180 each coordinate Zn(2+). A dihydroxyacetone phosphate-binding site is contributed by Gly-181. His-208 is a Zn(2+) binding site. Residues 209–211 and 230–233 each bind dihydroxyacetone phosphate; these read GAS and NVAT.

The protein belongs to the class II fructose-bisphosphate aldolase family. TagBP aldolase GatY subfamily. In terms of assembly, forms a complex with GatZ. Requires Zn(2+) as cofactor.

The catalysed reaction is D-tagatofuranose 1,6-bisphosphate = D-glyceraldehyde 3-phosphate + dihydroxyacetone phosphate. The protein operates within carbohydrate metabolism; D-tagatose 6-phosphate degradation; D-glyceraldehyde 3-phosphate and glycerone phosphate from D-tagatose 6-phosphate: step 2/2. Its function is as follows. Catalytic subunit of the tagatose-1,6-bisphosphate aldolase GatYZ, which catalyzes the reversible aldol condensation of dihydroxyacetone phosphate (DHAP or glycerone-phosphate) with glyceraldehyde 3-phosphate (G3P) to produce tagatose 1,6-bisphosphate (TBP). Requires GatZ subunit for full activity and stability. Is involved in the catabolism of galactitol. The sequence is that of D-tagatose-1,6-bisphosphate aldolase subunit GatY from Escherichia coli O45:K1 (strain S88 / ExPEC).